Reading from the N-terminus, the 277-residue chain is Large ribosomal subunit protein uL2 (277 aa).

The segment at 212–277 (RWRGKRPHVR…KFIVRGRKSK (66 aa)) is disordered. Basic residues predominate over residues 254–277 (TAGKKTRDKKKASTKFIVRGRKSK).

The protein belongs to the universal ribosomal protein uL2 family. Part of the 50S ribosomal subunit. Forms a bridge to the 30S subunit in the 70S ribosome.

Its function is as follows. One of the primary rRNA binding proteins. Required for association of the 30S and 50S subunits to form the 70S ribosome, for tRNA binding and peptide bond formation. It has been suggested to have peptidyltransferase activity; this is somewhat controversial. Makes several contacts with the 16S rRNA in the 70S ribosome. The sequence is that of Large ribosomal subunit protein uL2 from Leuconostoc citreum (strain KM20).